We begin with the raw amino-acid sequence, 66 residues long: Clusterin (66 aa).

It belongs to the clusterin family. In terms of assembly, antiparallel disulfide-linked heterodimer of an alpha chain and a beta chain. Self-associates and forms higher oligomers. Interacts with a broad range of misfolded proteins, including APP, APOC2 and LYZ. Slightly acidic pH promotes interaction with misfolded proteins. Forms high-molecular weight oligomers upon interaction with misfolded proteins. Interacts with APOA1, LRP2, CLUAP1 and PON1. Interacts with the complement membrane attack complex. Interacts (via alpha chain) with XRCC6. Interacts with SYVN1, COMMD1, BTRC, CUL1 and with ubiquitin and SCF (SKP1-CUL1-F-box protein) E3 ubiquitin-protein ligase complexes. Interacts (via alpha chain) with BAX in stressed cells, where BAX undergoes a conformation change leading to association with the mitochondrial membrane. Does not interact with BAX in unstressed cells. Found in a complex with LTF, CLU, EPPIN and SEMG1. Interacts (immaturely glycosylated pre-secreted form) with HSPA5; this interaction promotes CLU stability and facilitates stress-induced CLU retrotranslocation from the secretory pathway to the mitochondria, thereby reducing stress-induced apoptosis by stabilizing mitochondrial membrane integrity. Interacts with BCL2L1; this interaction releases and activates BAX and promotes cell death. Interacts with TGFBR2 and ACVR1. Interacts (secreted form) with STMN3; this interaction may act as an important modulator during neuronal differentiation. Component of a epididymal complex at least composed of soluble form of prion protein PRNP, CLU, BPI, CES5A, MANBA and GLB1. Post-translationally, proteolytically cleaved on its way through the secretory system, probably within the Golgi lumen. Proteolytic cleavage is not necessary for its chaperone activity. All non-secreted forms are not proteolytically cleaved. Chaperone activity of uncleaved forms is dependent on a non-reducing environment. In terms of processing, polyubiquitinated, leading to proteasomal degradation. Under cellular stress, the intracellular level of cleaved form is reduced due to proteasomal degradation. Heavily N-glycosylated. About 30% of the protein mass is comprised of complex N-linked carbohydrate. Endoplasmic reticulum (ER) stress induces changes in glycosylation status and increases level of hypoglycosylated forms. Core carbohydrates are essential for chaperone activity. Non-secreted forms are hypoglycosylated or unglycosylated.

It localises to the secreted. The protein localises to the nucleus. It is found in the cytoplasm. Its subcellular location is the mitochondrion membrane. The protein resides in the cytosol. It localises to the microsome. The protein localises to the endoplasmic reticulum. It is found in the mitochondrion. Its subcellular location is the perinuclear region. The protein resides in the cytoplasmic vesicle. It localises to the secretory vesicle. The protein localises to the chromaffin granule. In terms of biological role, functions as extracellular chaperone that prevents aggregation of non native proteins. Prevents stress-induced aggregation of blood plasma proteins. Inhibits formation of amyloid fibrils by APP, APOC2, B2M, CALCA, CSN3, SNCA and aggregation-prone LYZ variants (in vitro). Does not require ATP. Maintains partially unfolded proteins in a state appropriate for subsequent refolding by other chaperones, such as HSPA8/HSC70. Does not refold proteins by itself. Binding to cell surface receptors triggers internalization of the chaperone-client complex and subsequent lysosomal or proteasomal degradation. When secreted, protects cells against apoptosis and against cytolysis by complement: inhibits assembly of the complement membrane attack complex (MAC) by preventing polymerization of C9 pore component of the MAC complex. Intracellular forms interact with ubiquitin and SCF (SKP1-CUL1-F-box protein) E3 ubiquitin-protein ligase complexes and promote the ubiquitination and subsequent proteasomal degradation of target proteins. Promotes proteasomal degradation of COMMD1 and IKBKB. Modulates NF-kappa-B transcriptional activity. Following stress, promotes apoptosis. Inhibits apoptosis when associated with the mitochondrial membrane by interference with BAX-dependent release of cytochrome c into the cytoplasm. Plays a role in the regulation of cell proliferation. An intracellular form suppresses stress-induced apoptosis by stabilizing mitochondrial membrane integrity through interaction with HSPA5. Secreted form does not affect caspase or BAX-mediated intrinsic apoptosis and TNF-induced NF-kappa-B-activity. Secreted form act as an important modulator during neuronal differentiation through interaction with STMN3. Plays a role in the clearance of immune complexes that arise during cell injury. The sequence is that of Clusterin (CLU) from Ovis aries (Sheep).